Consider the following 233-residue polypeptide: Preflagellin peptidase (233 aa).

A topological domain (cytoplasmic) is located at residue Met-1. Residues 2-18 traverse the membrane as a helical segment; that stretch reads IAYAIGLLGLLIASIQD. Topologically, residues 19–23 are extracellular; that stretch reads IKSRE. Residues 24-46 traverse the membrane as a helical segment; the sequence is IENYIWIGMAVIGLLLSTYLSFT. Residues 47–49 are Cytoplasmic-facing; it reads TGN. The chain crosses the membrane as a helical span at residues 50–72; sequence FMPIISSISGFIICFIIGYLMFV. Topologically, residues 73–78 are extracellular; that stretch reads LGIGGA. Residues 79–89 form a helical membrane-spanning segment; it reads DGKILMGMGAL. Residues 90-110 lie on the Cytoplasmic side of the membrane; the sequence is IPSYAFPVYSSLQPLYTMEYI. The chain crosses the membrane as a helical span at residues 111–139; that stretch reads PWFPLLVFFNGVILMIVLPIYLFFKNLSN. Residues 140-207 lie on the Extracellular side of the membrane; sequence GVKPKKLKEY…QYVWATPELP (68 aa). Residues 208–219 form a helical membrane-spanning segment; sequence LLVPIALSYIIT. The Cytoplasmic portion of the chain corresponds to 220–233; it reads PFLGDKILSIILPM.

This sequence belongs to the peptidase A24 family. Archaeal preflagellin peptidase subfamily.

It is found in the cell membrane. The catalysed reaction is Cleaves the signal peptide of 3 to 12 amino acids from the N-terminal of preflagellin, usually at Arg-Gly-|- or Lys-Gly-|-, to release flagellin.. In terms of biological role, cleaves the N-terminal leader peptide from preflagellins. The processing of preflagellins is necessary for assembly of flagellins into a flagellum structure. This is Preflagellin peptidase (flaK) from Methanococcus voltae.